A 324-amino-acid polypeptide reads, in one-letter code: Acetyl-coenzyme A carboxylase carboxyl transferase subunit alpha (324 aa).

Positions 42–296 constitute a CoA carboxyltransferase C-terminal domain; the sequence is RLSELEEEVY…EKALTRLAEK (255 aa).

Belongs to the AccA family. Acetyl-CoA carboxylase is a heterohexamer composed of biotin carboxyl carrier protein (AccB), biotin carboxylase (AccC) and two subunits each of ACCase subunit alpha (AccA) and ACCase subunit beta (AccD).

The protein localises to the cytoplasm. It catalyses the reaction N(6)-carboxybiotinyl-L-lysyl-[protein] + acetyl-CoA = N(6)-biotinyl-L-lysyl-[protein] + malonyl-CoA. The protein operates within lipid metabolism; malonyl-CoA biosynthesis; malonyl-CoA from acetyl-CoA: step 1/1. Component of the acetyl coenzyme A carboxylase (ACC) complex. First, biotin carboxylase catalyzes the carboxylation of biotin on its carrier protein (BCCP) and then the CO(2) group is transferred by the carboxyltransferase to acetyl-CoA to form malonyl-CoA. The sequence is that of Acetyl-coenzyme A carboxylase carboxyl transferase subunit alpha from Shouchella clausii (strain KSM-K16) (Alkalihalobacillus clausii).